The chain runs to 346 residues: DNA-directed RNA polymerases I and III subunit RPAC1 (346 aa).

Residue Ala2 is modified to N-acetylalanine.

The protein belongs to the archaeal Rpo3/eukaryotic RPB3 RNA polymerase subunit family. Component of the RNA polymerase I and RNA polymerase III complexes consisting of at least 13 and 17 subunits, respectively. Pol I complex consists of a ten-subunit catalytic core composed of POLR1A/RPA1, POLR1B/RPA2, POLR1C/RPAC1, POLR1D/RPAC2, POLR1H/RPA12, POLR2E/RPABC1, POLR2F/RPABC2, POLR2H/RPABC3, POLR2K/RPABC4 and POLR2L/RPABC5; a mobile stalk subunit POLR1F/RPA43 protruding from the core and additional subunits homologous to general transcription factors POLR1E/RPA49 and POLR1G/RPA34. Part of Pol I pre-initiation complex (PIC), in which Pol I core assembles with RRN3 and promoter-bound UTBF and SL1/TIF-IB complex. Pol III complex consists of a ten-subunit catalytic core composed of POLR3A/RPC1, POLR3B/RPC2, POLR1C/RPAC1, POLR1D/RPAC2, POLR3K/RPC10, POLR2E/RPABC1, POLR2F/RPABC2, POLR2H/RPABC3, POLR2K/RPABC4 and POLR2L/RPABC5; a mobile stalk composed of two subunits POLR3H/RPC8 and CRCP/RPC9, protruding from the core and functioning primarily in transcription initiation; and additional subunits homologous to general transcription factors of the RNA polymerase II machinery, POLR3C/RPC3-POLR3F/RPC6-POLR3G/RPC7 heterotrimer required for transcription initiation and POLR3D/RPC4-POLR3E/RPC5 heterodimer involved in both transcription initiation and termination.

It is found in the nucleus. Its subcellular location is the cytoplasm. The protein resides in the cytosol. DNA-dependent RNA polymerase catalyzes the transcription of DNA into RNA using the four ribonucleoside triphosphates as substrates. Common component of RNA polymerases I and III which synthesize ribosomal RNA precursors and short non-coding RNAs including 5S rRNA, snRNAs, tRNAs and miRNAs, respectively. POLR1C/RPAC1 is part of the polymerase core and may function as a clamp element that moves to open and close the cleft. The polypeptide is DNA-directed RNA polymerases I and III subunit RPAC1 (Mus musculus (Mouse)).